The sequence spans 156 residues: SsrA-binding protein (156 aa).

It belongs to the SmpB family.

The protein resides in the cytoplasm. Functionally, required for rescue of stalled ribosomes mediated by trans-translation. Binds to transfer-messenger RNA (tmRNA), required for stable association of tmRNA with ribosomes. tmRNA and SmpB together mimic tRNA shape, replacing the anticodon stem-loop with SmpB. tmRNA is encoded by the ssrA gene; the 2 termini fold to resemble tRNA(Ala) and it encodes a 'tag peptide', a short internal open reading frame. During trans-translation Ala-aminoacylated tmRNA acts like a tRNA, entering the A-site of stalled ribosomes, displacing the stalled mRNA. The ribosome then switches to translate the ORF on the tmRNA; the nascent peptide is terminated with the 'tag peptide' encoded by the tmRNA and targeted for degradation. The ribosome is freed to recommence translation, which seems to be the essential function of trans-translation. In Lactiplantibacillus plantarum (strain ATCC BAA-793 / NCIMB 8826 / WCFS1) (Lactobacillus plantarum), this protein is SsrA-binding protein.